Reading from the N-terminus, the 72-residue chain is MAGKIKKGALVRVVREKLENSLEATASDTRFPSYLFESKGEIVDMNDEYALLRFYTPTPNVWLRIDQLELVE.

This sequence belongs to the complex I NdhO subunit family. NDH-1 can be composed of about 15 different subunits; different subcomplexes with different compositions have been identified which probably have different functions.

Its subcellular location is the cellular thylakoid membrane. It carries out the reaction a plastoquinone + NADH + (n+1) H(+)(in) = a plastoquinol + NAD(+) + n H(+)(out). It catalyses the reaction a plastoquinone + NADPH + (n+1) H(+)(in) = a plastoquinol + NADP(+) + n H(+)(out). Functionally, NDH-1 shuttles electrons from an unknown electron donor, via FMN and iron-sulfur (Fe-S) centers, to quinones in the respiratory and/or the photosynthetic chain. The immediate electron acceptor for the enzyme in this species is believed to be plastoquinone. Couples the redox reaction to proton translocation, and thus conserves the redox energy in a proton gradient. Cyanobacterial NDH-1 also plays a role in inorganic carbon-concentration. This Gloeothece citriformis (strain PCC 7424) (Cyanothece sp. (strain PCC 7424)) protein is NAD(P)H-quinone oxidoreductase subunit O.